Here is a 155-residue protein sequence, read N- to C-terminus: Snaclec agkicetin-C subunit alpha (155 aa).

The signal sequence occupies residues Met1–Ala23. Cystine bridges form between Cys25–Cys36, Cys53–Cys149, and Cys124–Cys141. The C-type lectin domain maps to Tyr32–Lys150.

The protein belongs to the snaclec family. Heterodimer of subunits alpha and beta; disulfide-linked. In terms of tissue distribution, expressed by the venom gland.

The protein localises to the secreted. Its function is as follows. Is a potent glycoprotein Ibalpha (GP1BA) antagonist. Concentration-dependently inhibits botrocetin-, ristocetin- and low dose thrombin-induced platelet aggregation. Inhibits platelet adhesion only through inhibiting the vWF interaction with GP1BA, but has minimal effect on other platelet receptors, such as alpha-IIb/beta-3 (ITGA2B/ITGB3) or alpha-2/beta-1 (ITGA2/ITGB1). Causes an instant severe thrombocytopenia in rats and is not lethal to mice. In Deinagkistrodon acutus (Hundred-pace snake), this protein is Snaclec agkicetin-C subunit alpha.